A 115-amino-acid chain; its full sequence is U2-ctenitoxin-Pn1b (115 aa).

A signal peptide spans 1 to 17 (MKVAVIILSILVLAAAS). A propeptide spanning residues 18–61 (ESIEEYREDFSRPNAMERSANDWIPTAPSAVERSADFAVEELER) is cleaved from the precursor. 5 disulfides stabilise this stretch: Cys-64/Cys-78, Cys-71/Cys-84, Cys-75/Cys-113, Cys-77/Cys-98, and Cys-86/Cys-96. Residue Lys-115 is a propeptide.

Belongs to the neurotoxin 03 (Tx2) family. 04 subfamily. Expressed by the venom gland.

The protein resides in the secreted. In terms of biological role, blocks voltage-gated sodium channels (Nav). The chain is U2-ctenitoxin-Pn1b from Phoneutria nigriventer (Brazilian armed spider).